The following is an 834-amino-acid chain: Glycerol-3-phosphate acyltransferase (834 aa).

The HXXXXD motif signature appears at 309-314 (CHRSHI).

It belongs to the GPAT/DAPAT family.

The protein resides in the cell inner membrane. The catalysed reaction is sn-glycerol 3-phosphate + an acyl-CoA = a 1-acyl-sn-glycero-3-phosphate + CoA. The protein operates within phospholipid metabolism; CDP-diacylglycerol biosynthesis; CDP-diacylglycerol from sn-glycerol 3-phosphate: step 1/3. The sequence is that of Glycerol-3-phosphate acyltransferase from Pseudomonas paraeruginosa (strain DSM 24068 / PA7) (Pseudomonas aeruginosa (strain PA7)).